Consider the following 27-residue polypeptide: VGCEECPMHCKGKKALPTCDYGCECND.

Cystine bridges form between C3-C19, C6-C23, and C10-C25.

The protein belongs to the short scorpion toxin superfamily. Potassium channel inhibitor family. Alpha-KTx 09 subfamily. Expressed by the venom gland.

Its subcellular location is the secreted. Functionally, may play a role in blocking voltage-gated potassium channels Kv1.2/KCNA2, Kv1.3/KCNA3 and Kv1.6/KCNA6 to a lesser extent. In Mesobuthus gibbosus (Mediterranean checkered scorpion), this protein is Potassium channel toxin alpha-KTx 9.11.